The sequence spans 275 residues: Undecaprenyl-diphosphatase (275 aa).

Helical transmembrane passes span 4–24, 54–74, 92–112, 123–143, 154–174, 194–214, 228–248, and 255–275; these read IYGL…EFLP, LGSI…LFGL, LHLY…LMFY, YVMY…LIHD, ISYL…LPGF, AFEF…ILDL, MFII…KLFW, and SFIP…LILI.

This sequence belongs to the UppP family.

It localises to the cell membrane. It carries out the reaction di-trans,octa-cis-undecaprenyl diphosphate + H2O = di-trans,octa-cis-undecaprenyl phosphate + phosphate + H(+). Its function is as follows. Catalyzes the dephosphorylation of undecaprenyl diphosphate (UPP). Confers resistance to bacitracin. This is Undecaprenyl-diphosphatase from Baumannia cicadellinicola subsp. Homalodisca coagulata.